We begin with the raw amino-acid sequence, 1130 residues long: Tyrosine-protein kinase ABL1 (1130 aa).

The segment at 1–60 (MLEICLKLVGCKSKKGLSSSSSCYLEEALQRPVASDFEPQGLSEAARWNSKENLLAGPSE) is CAP. Leucine 2 is lipidated: N-myristoyl glycine. Serine 50 bears the Phosphoserine mark. Residues 61 to 121 (NDPNLFVALY…PSNYITPVNS (61 aa)) form the SH3 domain. At tyrosine 70 the chain carries Phosphotyrosine; by autocatalysis. 6 positions are modified to phosphotyrosine: tyrosine 115, tyrosine 128, tyrosine 139, tyrosine 172, tyrosine 185, and tyrosine 215. The SH2 domain occupies 127–217 (WYHGPVSRNA…GLITTLHYPA (91 aa)). Phosphotyrosine; by autocatalysis is present on tyrosine 226. Serine 229 bears the Phosphoserine mark. Positions 242–493 (ITMKHKLGGG…PSFAEIHQAF (252 aa)) constitute a Protein kinase domain. 248 to 256 (LGGGQYGEV) contributes to the ATP binding site. A phosphotyrosine mark is found at tyrosine 253 and tyrosine 257. ATP contacts are provided by residues lysine 271 and 316 to 322 (EFMTYGN). Aspartate 363 (proton acceptor) is an active-site residue. A Kinase activation loop motif is present at residues 381 to 405 (DFGLSRLMTGDTYTAHAGAKFPIKW). A Phosphotyrosine; by autocatalysis and SRC-type Tyr-kinases modification is found at tyrosine 393. Tyrosine 413 is subject to Phosphotyrosine. Phosphoserine is present on residues serine 446, serine 559, and serine 569. Residues 518–996 (AVSTLLQAPE…SASSALAGDQ (479 aa)) form a disordered region. Basic and acidic residues predominate over residues 537–566 (RAAEHRDTTDVPEMPHSKGQGESDPLDHEP). Residues 586 to 597 (EDERLLPKDKKT) are compositionally biased toward basic and acidic residues. The short motif at 605–609 (KKKKK) is the Nuclear localization signal 1 element. Serine 618 and serine 619 each carry phosphoserine; by PAK2. Phosphoserine is present on residues serine 620, serine 659, and serine 683. The span at 620-640 (SFREMDGQPERRGAGEEEGRD) shows a compositional bias: basic and acidic residues. A compositionally biased stretch (polar residues) spans 689 to 698 (KSSTLTSSRL). A Nuclear localization signal 2 motif is present at residues 709-715 (SSKRFLR). An N6-acetyllysine; by EP300 modification is found at lysine 711. The residue at position 718 (serine 718) is a Phosphoserine. A phosphothreonine mark is found at threonine 735 and threonine 751. Polar residues predominate over residues 740 to 752 (LQSTGRQFDSSTF). Over residues 755–774 (HKSEKPALPRKRAGENRSDQ) the composition is skewed to basic and acidic residues. The Nuclear localization signal 3 signature appears at 762–769 (LPRKRAGE). Residue threonine 781 is modified to Phosphothreonine. Residues 788-802 (KKNEEAADEVFKDIM) show a composition bias toward basic and acidic residues. Phosphothreonine occurs at positions 814, 823, 844, and 852. Serine 855 bears the Phosphoserine mark. A DNA-binding region spans residues 869-968 (PAEESRVRRH…VLPATPKPQS (100 aa)). The segment covering 881-891 (SSESPGRDKGK) has biased composition (basic and acidic residues). The segment covering 905-915 (ASAGKAGGKPS) has biased composition (low complexity). Serine 917 is subject to Phosphoserine. The interval 953 to 1130 (EGLKKPVLPA…VKEISDIVQR (178 aa)) is F-actin-binding. The span at 965 to 975 (KPQSAKPSGTP) shows a compositional bias: polar residues. Serine 977 carries the phosphoserine modification. Positions 984 to 993 (TLPSASSALA) are enriched in low complexity. Residues 1090-1100 (LENNLRELQIC) carry the Nuclear export signal motif.

It belongs to the protein kinase superfamily. Tyr protein kinase family. ABL subfamily. Interacts with SORBS1 following insulin stimulation. Found in a trimolecular complex containing CDK5 and CABLES1. Interacts with CABLES1 and PSTPIP1. Interacts with ZDHHC16, ITGB1 and HCK. Interacts with STX17; probably phosphorylates STX17. Interacts with INPPL1/SHIP2. Interacts with the 14-3-3 proteins, YWHAB, YWHAE, YWHAG, YWHAH, SFN and YWHAZ; the interaction with 14-3-3 proteins requires phosphorylation on Thr-735 and, sequesters ABL1 into the cytoplasm. Interacts with ABI1, ABI2, BCR, CRK, FGR, FYN, HCK, LYN, PSMA7 RAD9A, RAD51, RAD52, TP73 and WASF3. A complex made of ABL1, CTTN and MYLK regulates cortical actin-based cytoskeletal rearrangement critical to sphingosine 1-phosphate (S1P)-mediated endothelial cell (EC) barrier enhancement. Interacts (via SH3 domain) with CASP9; the interaction is direct and increases in the response of cells to genotoxic stress and ABL1/c-Abl activation. Found in a complex with ABL1, ABL2, CRK and UNC119; leading to the inhibition of CRK phosphorylation by ABL kinases. Interacts with TBX21. Interacts with NEDD9/HEF1; interaction is induced by CXCL12 promotion of ABL-mediated phosphorylation of NEDD9/HEF1. It depends on Mg(2+) as a cofactor. Post-translationally, acetylated at Lys-711 by EP300 which promotes the cytoplasmic translocation. Phosphorylation at Tyr-70 by members of the SRC family of kinases disrupts SH3 domain-based autoinhibitory interactions and intermolecular associations, such as that with ABI1, and also enhances kinase activity. Phosphorylation at Tyr-226 and Tyr-393 correlate with increased activity. DNA damage-induced activation of ABL1 requires the function of ATM and Ser-446 phosphorylation. Phosphorylation at Ser-569 has been attributed to a CDC2-associated kinase and is coupled to cell division. Phosphorylation at Ser-618 and Ser-619 by PAK2 increases binding to CRK and reduces binding to ABI1. Phosphorylation on Thr-735 is required for binding 14-3-3 proteins for cytoplasmic translocation. Phosphorylated by PRKDC. In terms of processing, polyubiquitinated. Polyubiquitination of ABL1 leads to degradation. Widely expressed.

The protein resides in the cytoplasm. It localises to the cytoskeleton. It is found in the nucleus. Its subcellular location is the mitochondrion. The protein localises to the nucleus membrane. It catalyses the reaction L-tyrosyl-[protein] + ATP = O-phospho-L-tyrosyl-[protein] + ADP + H(+). Stabilized in the inactive form by an association between the SH3 domain and the SH2-TK linker region, interactions of the N-terminal cap, and contributions from an N-terminal myristoyl group and phospholipids. Activated by autophosphorylation as well as by SRC-family kinase-mediated phosphorylation. Activated by RIN1 binding to the SH2 and SH3 domains. Also stimulated by cell death inducers and DNA-damage. Phosphatidylinositol 4,5-bisphosphate (PIP2), a highly abundant phosphoinositide known to regulate cytoskeletal and membrane proteins, also inhibits the tyrosine kinase activity. Activated by 5-(1,3-diaryl-1H-pyrazol-4-yl)hydantoin, 5-[3-(4-fluorophenyl)-1-phenyl-1H-pyrazol-4-yl]-2,4-imidazolidinedione (DPH). Inhibited by ABI1, whose activity is controlled by ABL1 itself through tyrosine phosphorylation. Also inhibited by imatinib mesylate (Gleevec) which is used for the treatment of chronic myeloid leukemia (CML), and by VX-680, an inhibitor that also acts on imatinib-resistant mutants. In terms of biological role, non-receptor tyrosine-protein kinase that plays a role in many key processes linked to cell growth and survival such as cytoskeleton remodeling in response to extracellular stimuli, cell motility and adhesion, receptor endocytosis, autophagy, DNA damage response and apoptosis. Coordinates actin remodeling through tyrosine phosphorylation of proteins controlling cytoskeleton dynamics like WASF3 (involved in branch formation); ANXA1 (involved in membrane anchoring); DBN1, DBNL, CTTN, RAPH1 and ENAH (involved in signaling); or MAPT and PXN (microtubule-binding proteins). Phosphorylation of WASF3 is critical for the stimulation of lamellipodia formation and cell migration. Involved in the regulation of cell adhesion and motility through phosphorylation of key regulators of these processes such as BCAR1, CRK, CRKL, DOK1, EFS or NEDD9. Phosphorylates multiple receptor tyrosine kinases and more particularly promotes endocytosis of EGFR, facilitates the formation of neuromuscular synapses through MUSK, inhibits PDGFRB-mediated chemotaxis and modulates the endocytosis of activated B-cell receptor complexes. Other substrates which are involved in endocytosis regulation are the caveolin (CAV1) and RIN1. Moreover, ABL1 regulates the CBL family of ubiquitin ligases that drive receptor down-regulation and actin remodeling. Phosphorylation of CBL leads to increased EGFR stability. Involved in late-stage autophagy by regulating positively the trafficking and function of lysosomal components. ABL1 targets to mitochondria in response to oxidative stress and thereby mediates mitochondrial dysfunction and cell death. In response to oxidative stress, phosphorylates serine/threonine kinase PRKD2 at 'Tyr-717'. ABL1 is also translocated in the nucleus where it has DNA-binding activity and is involved in DNA-damage response and apoptosis. Many substrates are known mediators of DNA repair: DDB1, DDB2, ERCC3, ERCC6, RAD9A, RAD51, RAD52 or WRN. Activates the proapoptotic pathway when the DNA damage is too severe to be repaired. Phosphorylates TP73, a primary regulator for this type of damage-induced apoptosis. Phosphorylates the caspase CASP9 on 'Tyr-153' and regulates its processing in the apoptotic response to DNA damage. Phosphorylates PSMA7 that leads to an inhibition of proteasomal activity and cell cycle transition blocks. ABL1 also acts as a regulator of multiple pathological signaling cascades during infection. Several known tyrosine-phosphorylated microbial proteins have been identified as ABL1 substrates. This is the case of A36R of Vaccinia virus, Tir (translocated intimin receptor) of pathogenic E.coli and possibly Citrobacter, CagA (cytotoxin-associated gene A) of H.pylori, or AnkA (ankyrin repeat-containing protein A) of A.phagocytophilum. Pathogens can highjack ABL1 kinase signaling to reorganize the host actin cytoskeleton for multiple purposes, like facilitating intracellular movement and host cell exit. Finally, functions as its own regulator through autocatalytic activity as well as through phosphorylation of its inhibitor, ABI1. Regulates T-cell differentiation in a TBX21-dependent manner. Positively regulates chemokine-mediated T-cell migration, polarization, and homing to lymph nodes and immune-challenged tissues, potentially via activation of NEDD9/HEF1 and RAP1. Phosphorylates TBX21 on tyrosine residues leading to an enhancement of its transcriptional activator activity. The protein is Tyrosine-protein kinase ABL1 (ABL1) of Homo sapiens (Human).